The following is a 554-amino-acid chain: 3-(3-hydroxy-phenyl)propionate/3-hydroxycinnamic acid hydroxylase (554 aa).

FAD is bound by residues 17-46 (QVAI…VVEK) and 285-295 (FRIDRVLLAGD).

This sequence belongs to the PheA/TfdB FAD monooxygenase family. It depends on FAD as a cofactor.

The catalysed reaction is 3-(3-hydroxyphenyl)propanoate + NADH + O2 + H(+) = 3-(2,3-dihydroxyphenyl)propanoate + NAD(+) + H2O. It catalyses the reaction (2E)-3-(3-hydroxyphenyl)prop-2-enoate + NADH + O2 + H(+) = (2E)-3-(2,3-dihydroxyphenyl)prop-2-enoate + NAD(+) + H2O. The protein operates within aromatic compound metabolism; 3-phenylpropanoate degradation. Its function is as follows. Catalyzes the insertion of one atom of molecular oxygen into position 2 of the phenyl ring of 3-(3-hydroxyphenyl)propionate (3-HPP) and hydroxycinnamic acid (3HCI). The protein is 3-(3-hydroxy-phenyl)propionate/3-hydroxycinnamic acid hydroxylase of Escherichia coli (strain K12 / DH10B).